A 702-amino-acid polypeptide reads, in one-letter code: Polyribonucleotide nucleotidyltransferase (702 aa).

D485 and D491 together coordinate Mg(2+). Residues 552–611 form the KH domain; it reads PRITTLKINPEKIRDVIGKGGATIRALTEETGTTIELEDDGTVKIASANGEATKEAIRRI. The S1 motif domain occupies 621–689; it reads GTVYNGKVVR…RQGRVRLSMK (69 aa).

Belongs to the polyribonucleotide nucleotidyltransferase family. As to quaternary structure, component of the RNA degradosome, which is a multiprotein complex involved in RNA processing and mRNA degradation. Mg(2+) is required as a cofactor.

It is found in the cytoplasm. The enzyme catalyses RNA(n+1) + phosphate = RNA(n) + a ribonucleoside 5'-diphosphate. Involved in mRNA degradation. Catalyzes the phosphorolysis of single-stranded polyribonucleotides processively in the 3'- to 5'-direction. This Shewanella woodyi (strain ATCC 51908 / MS32) protein is Polyribonucleotide nucleotidyltransferase.